Reading from the N-terminus, the 1029-residue chain is Collagen, type I, alpha 1b (1029 aa).

The disordered stretch occupies residues glutamine 1–histidine 990. Residues proline 13–serine 33 show a composition bias toward pro residues. A compositionally biased stretch (low complexity) spans serine 34–serine 57. Residues asparagine 67–glutamate 81 show a composition bias toward basic and acidic residues. 3 stretches are compositionally biased toward low complexity: residues arginine 82–arginine 91, valine 120–arginine 129, and serine 136–proline 147. Over residues proline 163–glycine 182 the composition is skewed to gly residues. Composition is skewed to low complexity over residues alanine 199–alanine 223, alanine 233–alanine 267, and glutamate 299–proline 309. Gly residues predominate over residues glycine 310–glycine 322. 2 stretches are compositionally biased toward low complexity: residues glutamate 323 to lysine 351 and valine 429 to threonine 465. The span at glycine 466–glycine 477 shows a compositional bias: gly residues. Residues proline 478–alanine 497 are compositionally biased toward low complexity. Gly residues-rich tracts occupy residues glycine 498 to glycine 507 and glycine 531 to glycine 540. Low complexity-rich tracts occupy residues valine 571–alanine 580 and alanine 593–alanine 620. Composition is skewed to gly residues over residues glycine 621 to glycine 630 and glycine 645 to glycine 654. 5 stretches are compositionally biased toward low complexity: residues alanine 655–valine 665, glutamate 694–aspartate 722, proline 731–glutamine 743, alanine 830–lysine 839, and serine 855–alanine 869. Basic and acidic residues predominate over residues lysine 870–glycine 884. The span at proline 906–proline 934 shows a compositional bias: low complexity. A compositionally biased stretch (pro residues) spans alanine 952–proline 967. Positions threonine 999 to leucine 1029 constitute a Fibrillar collagen NC1 domain.

It belongs to the fibrillar collagen family.

The protein resides in the secreted. The protein localises to the extracellular space. It localises to the extracellular matrix. The polypeptide is Collagen, type I, alpha 1b (Epinephelus aeneus (White grouper)).